Here is a 372-residue protein sequence, read N- to C-terminus: Mitogen-activated protein kinase kinase kinase 17 (372 aa).

A Protein kinase domain is found at tryptophan 3–leucine 259. Residues leucine 9 to valine 17 and lysine 32 contribute to the ATP site. The active-site Proton acceptor is aspartate 126. At serine 312 the chain carries Phosphoserine.

Belongs to the protein kinase superfamily. Ser/Thr protein kinase family. In terms of assembly, binds to MKK3.

It is found in the nucleus. The catalysed reaction is L-seryl-[protein] + ATP = O-phospho-L-seryl-[protein] + ADP + H(+). The enzyme catalyses L-threonyl-[protein] + ATP = O-phospho-L-threonyl-[protein] + ADP + H(+). In terms of biological role, component of the abscisic acid (ABA) signaling pathway that may act as ABA signal transducer in the context of abiotic stresses. Triggers MPK7 activation in a MKK3-dependent manner. Mediates the ABA-dependent activation of the MKK3-MPK7 module. This chain is Mitogen-activated protein kinase kinase kinase 17, found in Arabidopsis thaliana (Mouse-ear cress).